A 443-amino-acid chain; its full sequence is MESLAALYKNHIVTLQERTRDVLARFKLDALLIHSGELFNVFLDDHPYPFKVNPQFKAWVPVTQVPNCWLLVDGVNKPKLWFYLPVDYWHNVEPLPTSFWTEEIEVVALPKADGIGSQLPVARGNIGYIGSAPERALQLDIAANNINPKGVIDYLHYYRAYKTDYELACMREAQKMAVSGHHAAEEAFRSGMSEFDINLAYLTATGHRDTDVPYSNIVALNEHAAVLHYTKLDHQAPSEMRSFLLDAGAEYNGYAADLTRTWSAKNDNDYAQLVKDVNDEQLALIATMKAGISYVDYHIQFHQRIAKLLRKHQIITDMSEEAMVENDLTGPFMPHGIGHPLGLQVHDVAGFMQDDSGTHLAAPSKYPYLRCTRVLQPRMVLTIEPGIYFIESLLAPWREGPFSKHFNWQKIEALKPFGGIRIEDNVVIHENGVENMTRDLKLA.

Mn(2+) is bound by residues Asp246, Asp257, His339, Glu384, and Glu423.

It belongs to the peptidase M24B family. Bacterial-type prolidase subfamily. Mn(2+) is required as a cofactor.

The enzyme catalyses Xaa-L-Pro dipeptide + H2O = an L-alpha-amino acid + L-proline. Functionally, splits dipeptides with a prolyl residue in the C-terminal position. This is Xaa-Pro dipeptidase from Salmonella arizonae (strain ATCC BAA-731 / CDC346-86 / RSK2980).